The following is a 164-amino-acid chain: UPF0114 protein Avin_40830 (164 aa).

A run of 4 helical transmembrane segments spans residues 15–35 (LLAP…LKFF), 53–73 (LILV…LVMV), 103–125 (GSLK…LRVF), and 136–156 (LLWY…MSYL).

This sequence belongs to the UPF0114 family.

The protein resides in the cell membrane. The chain is UPF0114 protein Avin_40830 from Azotobacter vinelandii (strain DJ / ATCC BAA-1303).